The chain runs to 161 residues: ATP synthase subunit b 1 (161 aa).

The helical transmembrane segment at 6–26 (EFYVALGFVIFVAILLYYGVH) threads the bilayer.

It belongs to the ATPase B chain family. As to quaternary structure, F-type ATPases have 2 components, F(1) - the catalytic core - and F(0) - the membrane proton channel. F(1) has five subunits: alpha(3), beta(3), gamma(1), delta(1), epsilon(1). F(0) has three main subunits: a(1), b(2) and c(10-14). The alpha and beta chains form an alternating ring which encloses part of the gamma chain. F(1) is attached to F(0) by a central stalk formed by the gamma and epsilon chains, while a peripheral stalk is formed by the delta and b chains.

The protein resides in the cell inner membrane. In terms of biological role, f(1)F(0) ATP synthase produces ATP from ADP in the presence of a proton or sodium gradient. F-type ATPases consist of two structural domains, F(1) containing the extramembraneous catalytic core and F(0) containing the membrane proton channel, linked together by a central stalk and a peripheral stalk. During catalysis, ATP synthesis in the catalytic domain of F(1) is coupled via a rotary mechanism of the central stalk subunits to proton translocation. Component of the F(0) channel, it forms part of the peripheral stalk, linking F(1) to F(0). This Beijerinckia indica subsp. indica (strain ATCC 9039 / DSM 1715 / NCIMB 8712) protein is ATP synthase subunit b 1.